The sequence spans 154 residues: MKETIISSMEKFIQKFFEELYLILFDYALKIAQNPIDELLIFGSIAIAYTVIYISGLFFARKINLPYIRKILEIGISVIFYFLVSLLEGKFPQVESLLLLKTLFLVQTIRVFILSLEAFQAFGFTTKLLINIFSILGGISFFIIKLSPFTRRKI.

4 helical membrane-spanning segments follow: residues 39-61, 65-87, 94-113, and 128-150; these read LLIFGSIAIAYTVIYISGLFFAR, LPYIRKILEIGISVIFYFLVSLL, VESLLLLKTLFLVQTIRVFI, and LLINIFSILGGISFFIIKLSPFT.

The protein resides in the cell membrane. This is an uncharacterized protein from Aquifex aeolicus (strain VF5).